The sequence spans 525 residues: GMP synthase [glutamine-hydrolyzing] (525 aa).

The 199-residue stretch at 9–207 (RILILDFGSQ…VLDICGCAAL (199 aa)) folds into the Glutamine amidotransferase type-1 domain. C86 serves as the catalytic Nucleophile. Catalysis depends on residues H181 and E183. The region spanning 208-400 (WTPSNIVDDA…LGLPYDMVYR (193 aa)) is the GMPS ATP-PPase domain. Residue 235 to 241 (SGGVDSS) coordinates ATP.

As to quaternary structure, homodimer.

It catalyses the reaction XMP + L-glutamine + ATP + H2O = GMP + L-glutamate + AMP + diphosphate + 2 H(+). Its pathway is purine metabolism; GMP biosynthesis; GMP from XMP (L-Gln route): step 1/1. Its function is as follows. Catalyzes the synthesis of GMP from XMP. The chain is GMP synthase [glutamine-hydrolyzing] from Pseudomonas aeruginosa (strain LESB58).